The sequence spans 507 residues: ATP synthase subunit alpha, chloroplastic (507 aa).

ATP is bound at residue 170 to 177 (GDRQTGKT).

This sequence belongs to the ATPase alpha/beta chains family. As to quaternary structure, F-type ATPases have 2 components, CF(1) - the catalytic core - and CF(0) - the membrane proton channel. CF(1) has five subunits: alpha(3), beta(3), gamma(1), delta(1), epsilon(1). CF(0) has four main subunits: a, b, b' and c.

The protein resides in the plastid. Its subcellular location is the chloroplast thylakoid membrane. It carries out the reaction ATP + H2O + 4 H(+)(in) = ADP + phosphate + 5 H(+)(out). Produces ATP from ADP in the presence of a proton gradient across the membrane. The alpha chain is a regulatory subunit. The protein is ATP synthase subunit alpha, chloroplastic of Cycas taitungensis (Prince sago).